Here is a 545-residue protein sequence, read N- to C-terminus: Hydroxylamine reductase (545 aa).

4 residues coordinate [4Fe-4S] cluster: C7, C10, C19, and C25. Hybrid [4Fe-2O-2S] cluster is bound by residues H241, E265, C309, C400, C428, C453, E488, and K490. C400 is subject to Cysteine persulfide; in oxidized form.

Belongs to the HCP family. As to quaternary structure, monomer. It depends on [4Fe-4S] cluster as a cofactor. Requires hybrid [4Fe-2O-2S] cluster as cofactor.

It localises to the cytoplasm. The catalysed reaction is A + NH4(+) + H2O = hydroxylamine + AH2 + H(+). In terms of biological role, catalyzes the reduction of hydroxylamine to form NH(3) and H(2)O. The protein is Hydroxylamine reductase of Desulfovibrio desulfuricans (strain ATCC 27774 / DSM 6949 / MB).